A 394-amino-acid chain; its full sequence is Methionine import ATP-binding protein MetN 2 (394 aa).

The ABC transporter domain occupies V39–L278. G75 to S82 is an ATP binding site.

It belongs to the ABC transporter superfamily. Methionine importer (TC 3.A.1.24) family. In terms of assembly, the complex is composed of two ATP-binding proteins (MetN), two transmembrane proteins (MetI) and a solute-binding protein (MetQ).

The protein localises to the cell inner membrane. The catalysed reaction is L-methionine(out) + ATP + H2O = L-methionine(in) + ADP + phosphate + H(+). The enzyme catalyses D-methionine(out) + ATP + H2O = D-methionine(in) + ADP + phosphate + H(+). In terms of biological role, part of the ABC transporter complex MetNIQ involved in methionine import. Responsible for energy coupling to the transport system. The polypeptide is Methionine import ATP-binding protein MetN 2 (Burkholderia cenocepacia (strain HI2424)).